The chain runs to 254 residues: Leucyl/phenylalanyl-tRNA--protein transferase (254 aa).

This sequence belongs to the L/F-transferase family.

It is found in the cytoplasm. The enzyme catalyses N-terminal L-lysyl-[protein] + L-leucyl-tRNA(Leu) = N-terminal L-leucyl-L-lysyl-[protein] + tRNA(Leu) + H(+). It carries out the reaction N-terminal L-arginyl-[protein] + L-leucyl-tRNA(Leu) = N-terminal L-leucyl-L-arginyl-[protein] + tRNA(Leu) + H(+). It catalyses the reaction L-phenylalanyl-tRNA(Phe) + an N-terminal L-alpha-aminoacyl-[protein] = an N-terminal L-phenylalanyl-L-alpha-aminoacyl-[protein] + tRNA(Phe). Functionally, functions in the N-end rule pathway of protein degradation where it conjugates Leu, Phe and, less efficiently, Met from aminoacyl-tRNAs to the N-termini of proteins containing an N-terminal arginine or lysine. In Burkholderia vietnamiensis (strain G4 / LMG 22486) (Burkholderia cepacia (strain R1808)), this protein is Leucyl/phenylalanyl-tRNA--protein transferase.